We begin with the raw amino-acid sequence, 79 residues long: Small ribosomal subunit protein bS18B (79 aa).

The protein belongs to the bacterial ribosomal protein bS18 family. Part of the 30S ribosomal subunit. Forms a tight heterodimer with protein bS6.

In terms of biological role, binds as a heterodimer with protein bS6 to the central domain of the 16S rRNA, where it helps stabilize the platform of the 30S subunit. In Mycolicibacterium gilvum (strain PYR-GCK) (Mycobacterium gilvum (strain PYR-GCK)), this protein is Small ribosomal subunit protein bS18B.